The primary structure comprises 338 residues: Nucleoid-associated protein CGSHiGG_07705 (338 aa).

This sequence belongs to the YejK family.

It localises to the cytoplasm. It is found in the nucleoid. This Haemophilus influenzae (strain PittGG) protein is Nucleoid-associated protein CGSHiGG_07705.